We begin with the raw amino-acid sequence, 113 residues long: Large ribosomal subunit protein eL31 (113 aa).

This sequence belongs to the eukaryotic ribosomal protein eL31 family. As to quaternary structure, component of the large ribosomal subunit (LSU). Mature yeast ribosomes consist of a small (40S) and a large (60S) subunit. The 40S small subunit contains 1 molecule of ribosomal RNA (18S rRNA) and at least 33 different proteins. The large 60S subunit contains 3 rRNA molecules (25S, 5.8S and 5S rRNA) and at least 46 different proteins.

It is found in the cytoplasm. Its function is as follows. Component of the ribosome, a large ribonucleoprotein complex responsible for the synthesis of proteins in the cell. The small ribosomal subunit (SSU) binds messenger RNAs (mRNAs) and translates the encoded message by selecting cognate aminoacyl-transfer RNA (tRNA) molecules. The large subunit (LSU) contains the ribosomal catalytic site termed the peptidyl transferase center (PTC), which catalyzes the formation of peptide bonds, thereby polymerizing the amino acids delivered by tRNAs into a polypeptide chain. The nascent polypeptides leave the ribosome through a tunnel in the LSU and interact with protein factors that function in enzymatic processing, targeting, and the membrane insertion of nascent chains at the exit of the ribosomal tunnel. This chain is Large ribosomal subunit protein eL31 (rpl31), found in Schizosaccharomyces pombe (strain 972 / ATCC 24843) (Fission yeast).